The following is a 1061-amino-acid chain: Carbamoyl phosphate synthase large chain (1061 aa).

Residues 1 to 401 (MPKRTDVHKI…ALQKAVRSLE (401 aa)) are carboxyphosphate synthetic domain. ATP contacts are provided by Arg-129, Arg-169, Gly-175, Gly-176, Lys-208, Ile-210, Glu-215, Gly-241, Ile-242, His-243, Gln-284, and Glu-298. An ATP-grasp 1 domain is found at 133 to 327 (KDLMQELNEP…IAKLAAKIAV (195 aa)). Mg(2+)-binding residues include Gln-284, Glu-298, and Asn-300. Mn(2+) is bound by residues Gln-284, Glu-298, and Asn-300. The tract at residues 402–546 (IDEKDLISAK…YSSYDLENES (145 aa)) is oligomerization domain. The interval 547–929 (KKSDKKSVLV…ALYKAFTGAK (383 aa)) is carbamoyl phosphate synthetic domain. The ATP-grasp 2 domain occupies 671–861 (DQTIKNLGLK…MAQVATRVIL (191 aa)). 10 residues coordinate ATP: Arg-707, Ala-746, Leu-748, Glu-752, Gly-777, Val-778, His-779, Ser-780, Gln-820, and Glu-832. Mg(2+) is bound by residues Gln-820, Glu-832, and Asn-834. Positions 820, 832, and 834 each coordinate Mn(2+). The region spanning 930-1061 (MELPDNGNVL…ENRSFATNSL (132 aa)) is the MGS-like domain. The interval 930-1061 (MELPDNGNVL…ENRSFATNSL (132 aa)) is allosteric domain.

This sequence belongs to the CarB family. In terms of assembly, composed of two chains; the small (or glutamine) chain promotes the hydrolysis of glutamine to ammonia, which is used by the large (or ammonia) chain to synthesize carbamoyl phosphate. Tetramer of heterodimers (alpha,beta)4. Requires Mg(2+) as cofactor. Mn(2+) serves as cofactor.

It catalyses the reaction hydrogencarbonate + L-glutamine + 2 ATP + H2O = carbamoyl phosphate + L-glutamate + 2 ADP + phosphate + 2 H(+). The catalysed reaction is hydrogencarbonate + NH4(+) + 2 ATP = carbamoyl phosphate + 2 ADP + phosphate + 2 H(+). It participates in amino-acid biosynthesis; L-arginine biosynthesis; carbamoyl phosphate from bicarbonate: step 1/1. It functions in the pathway pyrimidine metabolism; UMP biosynthesis via de novo pathway; (S)-dihydroorotate from bicarbonate: step 1/3. Large subunit of the glutamine-dependent carbamoyl phosphate synthetase (CPSase). CPSase catalyzes the formation of carbamoyl phosphate from the ammonia moiety of glutamine, carbonate, and phosphate donated by ATP, constituting the first step of 2 biosynthetic pathways, one leading to arginine and/or urea and the other to pyrimidine nucleotides. The large subunit (synthetase) binds the substrates ammonia (free or transferred from glutamine from the small subunit), hydrogencarbonate and ATP and carries out an ATP-coupled ligase reaction, activating hydrogencarbonate by forming carboxy phosphate which reacts with ammonia to form carbamoyl phosphate. The chain is Carbamoyl phosphate synthase large chain from Ligilactobacillus salivarius (strain UCC118) (Lactobacillus salivarius).